A 688-amino-acid polypeptide reads, in one-letter code: Methionine--tRNA ligase (688 aa).

The short motif at 20–30 is the 'HIGH' region element; it reads PYANGSIHLGH. The Zn(2+) site is built by C151, C154, C164, and C167. The short motif at 337-341 is the 'KMSKS' region element; it reads KMSKS. Position 340 (K340) interacts with ATP. Residues 587-688 form the tRNA-binding domain; that stretch reads TFAQVDLRIA…EGAQPGMRVM (102 aa).

It belongs to the class-I aminoacyl-tRNA synthetase family. MetG type 1 subfamily. As to quaternary structure, homodimer. Zn(2+) serves as cofactor.

The protein resides in the cytoplasm. It carries out the reaction tRNA(Met) + L-methionine + ATP = L-methionyl-tRNA(Met) + AMP + diphosphate. Functionally, is required not only for elongation of protein synthesis but also for the initiation of all mRNA translation through initiator tRNA(fMet) aminoacylation. The polypeptide is Methionine--tRNA ligase (Vibrio parahaemolyticus serotype O3:K6 (strain RIMD 2210633)).